The chain runs to 219 residues: Transmembrane emp24 domain-containing protein 10 (219 aa).

The first 31 residues, 1-31, serve as a signal peptide directing secretion; that stretch reads MSGLSGPPARRGPFPLALLLLFLLGPRLVLA. The tract at residues 1-142 is required for interaction with STX17; sequence MSGLSGPPAR…KNYEEIAKVE (142 aa). Residues 32-185 lie on the Lumenal side of the membrane; it reads ISFHLPINSR…RDTNESTNTR (154 aa). The 153-residue stretch at 41–193 folds into the GOLD domain; sequence RKCLREEIHK…TRVLYFSIFS (153 aa). The segment at 147–178 is required for TMED10 and TMED2 cis-Golgi network localization; sequence LEVELRRLEDLSESIVNDFAYMKKREEEMRDT. Dimethylated arginine is present on residues arginine 171 and arginine 176. Asparagine 179 carries an N-linked (GlcNAc...) asparagine glycan. Residues 186–206 traverse the membrane as a helical segment; that stretch reads VLYFSIFSMFCLIGLATWQVF. The interval 204–219 is interaction with COPG1; it reads QVFYLRRFFKAKKLIE. Over 207 to 219 the chain is Cytoplasmic; that stretch reads YLRRFFKAKKLIE. Positions 207 to 219 are interaction with ARF1 and IL1B; that stretch reads YLRRFFKAKKLIE. The short motif at 211–212 is the COPII vesicle coat-binding element; that stretch reads FF. Residues 211 to 219 carry the COPI vesicle coat-binding motif; the sequence is FFKAKKLIE.

This sequence belongs to the EMP24/GP25L family. In terms of assembly, predominantly dimeric and to a lesser extent monomeric in the ER. Monomer and dimer in ERGIC and cis-Golgi network. Forms homooligomer (via GOLD domain); the assembly is promoted by direct binding with leaderless cargos and may form a protein channel that facilitates cargo entry into the ERGIC. Forms heterooligomeric complexes with other members of the p24 family such as TMED2, TMED7 and TMED9. Interacts (via GOLD domain) with TMED2 (via GOLD domain); the complex is required for export of TMED10 from the ER to the cis-Golgi network; the complex is proposed to be involved in cis-Golgi network dynamics and / or biogenesis. Associates with the COPI vesicle coat subunits (coatomer). Tetramerization of the cytoplasmic domain at the Golgi membrane in vitro; the complex is proposed to interact with COPI coatomer and induce budding of the vesicles. Interacts with COPG1; the interaction involves TMED10 homodimer. Interacts with ARF1 (GDP-bound); the interaction probably involves a TMED10 oligomer. Interacts with SEC23A, SEC24B, SEC24C and SEC24D components of the coat protein complex II/COPII, indicative of an association of TMED10 with the COPII vesicle coat. Interacts with CD59. Interacts with MPPE1/PGAP5; the complex might recruit and sort GPI-anchored proteins to the ER-exit site, or the interaction might lead to recycling of PGAP5 between the ER and the Golgi. Interacts with F2LR1/PAR2. Interacts with KDELR2/ERD2; the interaction is disrupted by KDELR2 ligand. Found in a complex composed at least of SURF4, TMED2 and TMED10. Associates with the presenilin-dependent gamma-secretase complex. Interacts with STX17; the interaction is direct. Interacts with IL-1; the interaction is direct. Interacts with RAB21 (active GTP-bound form); the interaction is indirect and regulates TMED10 abundance and localization at the Golgi.

Its subcellular location is the endoplasmic reticulum membrane. The protein resides in the endoplasmic reticulum-Golgi intermediate compartment membrane. It localises to the golgi apparatus membrane. It is found in the golgi apparatus. The protein localises to the cis-Golgi network membrane. Its subcellular location is the trans-Golgi network membrane. The protein resides in the cytoplasmic vesicle. It localises to the secretory vesicle membrane. It is found in the cell membrane. The protein localises to the melanosome. Cargo receptor involved in protein vesicular trafficking and quality control in the endoplasmic reticulum (ER) and Golgi. The p24 protein family is a group of transmembrane proteins that bind coat protein complex I/COPI and coat protein complex II/COPII involved in vesicular trafficking between the membranes. Acts at the lumenal side for incorporation of secretory cargo molecules into transport vesicles and involved in vesicle coat formation at the cytoplasmic side. Mainly functions in the early secretory pathway and cycles between the ER, ER-Golgi intermediate compartment (ERGIC) and Golgi, mediating cargo transport through COPI and COPII-coated vesicles. In COPII vesicle-mediated anterograde transport, involved in the transport of GPI-anchored proteins by acting together with TMED2 as their cargo receptor; the function specifically implies SEC24C and SEC24D of the COPII vesicle coat and lipid raft-like microdomains of the ER. Recognizes GPI anchors structural remodeled in the ER by the GPI inositol-deacylase/PGAP1 and the metallophosphoesterase MPPE1/PGAP5. In COPI vesicle-mediated retrograde transport, involved in the biogenesis of COPI vesicles and vesicle coat recruitment. Involved in trafficking of amyloid beta A4 protein and soluble APP-beta release (independent from the modulation of gamma-secretase activity). Involved in the KDELR2-mediated retrograde transport of the toxin A subunit (CTX-A-K63)together with COPI and the COOH terminus of KDELR2. On Golgi membranes, acts as a primary receptor for ARF1-GDP, a GTP-binding protein involved in COPI-vesicle formation. Increases coatomer-dependent GTPase-activating activity of ARFGAP2 which mediates the hydrolysis of ARF1-bound GTP and therefore modulates protein trafficking from the Golgi apparatus. Involved in the exocytic trafficking of G protein-coupled receptors F2LR1/PAR2 (trypsin and tryspin-like enzyme receptor), OPRM1 (opioid receptor) and P2RY4 (UTD and UDP receptor) from the Golgi to the plasma membrane, thus contributing to receptor resensitization. In addition to its cargo receptor activity, may also act as a protein channel after oligomerization, facilitating the post-translational entry of leaderless cytoplasmic cargo into the ERGIC. Involved in the translocation into ERGIC, the vesicle entry and the secretion of leaderless cargos (lacking the secretion signal sequence), including the mature form of interleukin 1/IL-1 family members, the alpha-crystallin B chain HSPB5, the carbohydrate-binding proteins galectin-1/LGALS1 and galectin-3/LGALS3, the microtubule-associated protein Tau/MAPT, and the annexin A1/ANXA1; the translocation process is dependent on cargo protein unfolding and enhanced by chaperones HSP90AB1 and HSP90B1/GRP9. Could also associates with the presenilin-dependent gamma-secretase complex in order to regulate gamma-cleavages of the amyloid beta A4 protein to yield amyloid-beta 40/Abeta40. In Homo sapiens (Human), this protein is Transmembrane emp24 domain-containing protein 10.